The following is a 370-amino-acid chain: ABSCISIC ACID-INSENSITIVE 5-like protein 8 (370 aa).

Residues Ser-25, Ser-44, and Ser-69 each carry the phosphoserine modification. A disordered region spans residues 56–77 (SAEETQEGSQRQGSTTLPPTLS). Residues 62-77 (EGSQRQGSTTLPPTLS) show a composition bias toward polar residues. Position 111 is a phosphothreonine (Thr-111). Residues 260–278 (ESSLLSPSPYISNGSTSTR) show a composition bias toward polar residues. A disordered region spans residues 260-281 (ESSLLSPSPYISNGSTSTRGGK). The 64-residue stretch at 293–356 (VDKKLRRKIK…MEPGMISLHE (64 aa)) folds into the bZIP domain. The basic motif stretch occupies residues 295-314 (KKLRRKIKNRESAARSRARK). The interval 328 to 342 (LKKDYEELLKQHVEL) is leucine-zipper. Residues 349–370 (PGMISLHERPERKLRRTKSDIK) are disordered. The segment covering 354-370 (LHERPERKLRRTKSDIK) has biased composition (basic and acidic residues).

It belongs to the bZIP family. ABI5 subfamily. As to quaternary structure, DNA-binding heterodimer.

The protein localises to the nucleus. Its function is as follows. Could participate in abscisic acid-regulated gene expression. The polypeptide is ABSCISIC ACID-INSENSITIVE 5-like protein 8 (BZIP15) (Arabidopsis thaliana (Mouse-ear cress)).